The following is a 130-amino-acid chain: Larval cuticle protein 1 (130 aa).

The signal sequence occupies residues 1–16 (MFKFVMICAVLGLAVA). In terms of domain architecture, Chitin-binding type R&amp;R spans 43 to 104 (ADGFDSSLHT…PSGAWIPTPP (62 aa)).

Its function is as follows. Component of the larval cuticle. In Drosophila melanogaster (Fruit fly), this protein is Larval cuticle protein 1 (Lcp1).